A 338-amino-acid chain; its full sequence is UPF0104 membrane protein MTH_1261 (338 aa).

The next 8 membrane-spanning stretches (helical) occupy residues 6-26 (AILIVIGVVALAAMILIIGPG), 36-56 (DPVYVLMAVVLEFIILALFTL), 124-144 (LDTFPFIFLAVLTIIGIVLYF), 149-169 (WILAALIASVVIIVVAFFLAL), 231-251 (ISFLIWILEIIRVYLIFTAFG), 254-274 (ISLLVIAEVFILATLIGMIPL), 275-295 (LPGGLGAVDGIMIVFYSYAGV), and 310-330 (ISFWMISAMGVAAIPYFGSSV).

This sequence belongs to the UPF0104 family.

Its subcellular location is the cell membrane. The chain is UPF0104 membrane protein MTH_1261 from Methanothermobacter thermautotrophicus (strain ATCC 29096 / DSM 1053 / JCM 10044 / NBRC 100330 / Delta H) (Methanobacterium thermoautotrophicum).